Here is a 218-residue protein sequence, read N- to C-terminus: uncharacterized protein (218 aa).

Composition is skewed to polar residues over residues 1 to 21 (MSSQ…SSEF) and 68 to 102 (LNTS…SSDI). Disordered regions lie at residues 1 to 39 (MSSQ…RHAS), 63 to 116 (EKRL…STSG), and 170 to 205 (GAKR…GTPQ). Over residues 183–195 (KRQEKQSPLESRH) the composition is skewed to basic and acidic residues.

This is an uncharacterized protein from Caenorhabditis elegans.